The primary structure comprises 353 residues: D-alanine--D-alanine ligase (353 aa).

In terms of domain architecture, ATP-grasp spans 141-349; it reads KAAFAAAGLP…LEELVSQLVI (209 aa). Position 176 to 231 (176 to 231) interacts with ATP; the sequence is EAKLKYPCFVKPANLGSSVGISKAQNRNELLIGLDKAASLDRRIVVEQGVSARELE. Positions 302, 316, and 318 each coordinate Mg(2+).

Belongs to the D-alanine--D-alanine ligase family. The cofactor is Mg(2+). Mn(2+) serves as cofactor.

It localises to the cytoplasm. It carries out the reaction 2 D-alanine + ATP = D-alanyl-D-alanine + ADP + phosphate + H(+). Its pathway is cell wall biogenesis; peptidoglycan biosynthesis. Functionally, cell wall formation. The chain is D-alanine--D-alanine ligase from Prochlorococcus marinus (strain MIT 9303).